A 127-amino-acid chain; its full sequence is Small ribosomal subunit protein uS8m (127 aa).

It belongs to the universal ribosomal protein uS8 family.

It localises to the mitochondrion. This chain is Small ribosomal subunit protein uS8m (RPS8), found in Acanthamoeba castellanii (Amoeba).